Here is a 591-residue protein sequence, read N- to C-terminus: V-type ATP synthase alpha chain (591 aa).

Residue 233-240 (GPFGAGKT) coordinates ATP.

The protein belongs to the ATPase alpha/beta chains family.

The enzyme catalyses ATP + H2O + 4 H(+)(in) = ADP + phosphate + 5 H(+)(out). Produces ATP from ADP in the presence of a proton gradient across the membrane. The V-type alpha chain is a catalytic subunit. The sequence is that of V-type ATP synthase alpha chain from Streptococcus pneumoniae serotype 19F (strain G54).